The chain runs to 223 residues: Type III pantothenate kinase (223 aa).

Residue 17 to 24 participates in ATP binding; sequence DIGNTRIH. Substrate-binding positions include Tyr81 and 85–88; that span reads GIDR. Asp87 serves as the catalytic Proton acceptor. Residue Asp102 coordinates K(+). Ser105 is an ATP binding site. Position 157 (Thr157) interacts with substrate.

This sequence belongs to the type III pantothenate kinase family. Homodimer. The cofactor is NH4(+). Requires K(+) as cofactor.

Its subcellular location is the cytoplasm. It carries out the reaction (R)-pantothenate + ATP = (R)-4'-phosphopantothenate + ADP + H(+). Its pathway is cofactor biosynthesis; coenzyme A biosynthesis; CoA from (R)-pantothenate: step 1/5. Its function is as follows. Catalyzes the phosphorylation of pantothenate (Pan), the first step in CoA biosynthesis. The protein is Type III pantothenate kinase of Helicobacter pylori (strain J99 / ATCC 700824) (Campylobacter pylori J99).